Here is a 119-residue protein sequence, read N- to C-terminus: Acidic phospholipase A2 2 (119 aa).

Cystine bridges form between Cys-11–Cys-71, Cys-26–Cys-118, Cys-28–Cys-44, Cys-43–Cys-99, Cys-50–Cys-92, Cys-60–Cys-85, and Cys-78–Cys-90. Ca(2+) contacts are provided by Tyr-27, Gly-29, and Gly-31. His-47 is an active-site residue. Asp-48 is a Ca(2+) binding site. Asp-93 is a catalytic residue.

Belongs to the phospholipase A2 family. Group I subfamily. D49 sub-subfamily. As to quaternary structure, homotrimer. The cofactor is Ca(2+). As to expression, expressed by the venom gland.

The protein localises to the secreted. The enzyme catalyses a 1,2-diacyl-sn-glycero-3-phosphocholine + H2O = a 1-acyl-sn-glycero-3-phosphocholine + a fatty acid + H(+). PLA2 catalyzes the calcium-dependent hydrolysis of the 2-acyl groups in 3-sn-phosphoglycerides. In Naja naja (Indian cobra), this protein is Acidic phospholipase A2 2.